Consider the following 100-residue polypeptide: MEMLPLVKIAPEYNLTLDPSTGMIGAALGREVIILSMDEINEQIAALEATADDLINSLDPTTIPEGSYPGREGVYLTAGKLTNIVYGFILGLIILFALLL.

A helical transmembrane segment spans residues 80 to 100 (KLTNIVYGFILGLIILFALLL).

It belongs to the MtrB family. As to quaternary structure, the complex is composed of 8 subunits; MtrA, MtrB, MtrC, MtrD, MtrE, MtrF, MtrG and MtrH.

The protein resides in the cell membrane. The catalysed reaction is 5-methyl-5,6,7,8-tetrahydromethanopterin + coenzyme M + 2 Na(+)(in) = 5,6,7,8-tetrahydromethanopterin + methyl-coenzyme M + 2 Na(+)(out). It functions in the pathway one-carbon metabolism; methanogenesis from CO(2); methyl-coenzyme M from 5,10-methylene-5,6,7,8-tetrahydromethanopterin: step 2/2. Functionally, part of a complex that catalyzes the formation of methyl-coenzyme M and tetrahydromethanopterin from coenzyme M and methyl-tetrahydromethanopterin. This is an energy-conserving, sodium-ion translocating step. This Methanothermobacter marburgensis (strain ATCC BAA-927 / DSM 2133 / JCM 14651 / NBRC 100331 / OCM 82 / Marburg) (Methanobacterium thermoautotrophicum) protein is Tetrahydromethanopterin S-methyltransferase subunit B.